Here is a 210-residue protein sequence, read N- to C-terminus: Regulatory protein RecX (210 aa).

Positions 28–47 are disordered; that stretch reads SRRQEEGAASSLFDREAEEK.

The protein belongs to the RecX family.

It localises to the cytoplasm. In terms of biological role, modulates RecA activity. This is Regulatory protein RecX from Corynebacterium efficiens (strain DSM 44549 / YS-314 / AJ 12310 / JCM 11189 / NBRC 100395).